A 258-amino-acid chain; its full sequence is Regulatory protein RecX (258 aa).

Belongs to the RecX family.

The protein localises to the cytoplasm. Its function is as follows. Modulates RecA activity. In Streptococcus pyogenes serotype M12 (strain MGAS2096), this protein is Regulatory protein RecX.